We begin with the raw amino-acid sequence, 414 residues long: Probable indole-3-pyruvate monooxygenase YUCCA1 (414 aa).

Residue 25–30 (GAGPSG) coordinates FAD. 189–194 (GCGNSG) serves as a coordination point for NADP(+).

Belongs to the FMO family. The cofactor is FAD. Expressed in the apical meristems and young floral primordia. Detected in the floral meristems and at the base of the floral organs.

It carries out the reaction indole-3-pyruvate + NADPH + O2 + H(+) = (indol-3-yl)acetate + CO2 + NADP(+) + H2O. Its pathway is plant hormone metabolism; auxin biosynthesis. Involved in auxin biosynthesis, but not in the tryptamine or the CYP79B2/B3 branches. Catalyzes in vitro the N-oxidation of tryptamine to form N-hydroxyl tryptamine. Involved during embryogenesis and seedling development. Required for the formation of floral organs and vascular tissues. Belongs to the set of redundant YUCCA genes probably responsible for auxin biosynthesis in shoots. The protein is Probable indole-3-pyruvate monooxygenase YUCCA1 (YUC1) of Arabidopsis thaliana (Mouse-ear cress).